The following is a 208-amino-acid chain: Protein-L-isoaspartate O-methyltransferase (208 aa).

Ser59 is a catalytic residue.

Belongs to the methyltransferase superfamily. L-isoaspartyl/D-aspartyl protein methyltransferase family.

It is found in the cytoplasm. The enzyme catalyses [protein]-L-isoaspartate + S-adenosyl-L-methionine = [protein]-L-isoaspartate alpha-methyl ester + S-adenosyl-L-homocysteine. Its function is as follows. Catalyzes the methyl esterification of L-isoaspartyl residues in peptides and proteins that result from spontaneous decomposition of normal L-aspartyl and L-asparaginyl residues. It plays a role in the repair and/or degradation of damaged proteins. In Shigella sonnei (strain Ss046), this protein is Protein-L-isoaspartate O-methyltransferase.